The primary structure comprises 37 residues: Large ribosomal subunit protein bL36 (37 aa).

Belongs to the bacterial ribosomal protein bL36 family.

This is Large ribosomal subunit protein bL36 from Clostridium perfringens (strain ATCC 13124 / DSM 756 / JCM 1290 / NCIMB 6125 / NCTC 8237 / Type A).